Here is a 159-residue protein sequence, read N- to C-terminus: Ribosomal RNA large subunit methyltransferase H (159 aa).

S-adenosyl-L-methionine-binding residues include Leu-76 and Gly-108.

Belongs to the RNA methyltransferase RlmH family. Homodimer.

It localises to the cytoplasm. It catalyses the reaction pseudouridine(1915) in 23S rRNA + S-adenosyl-L-methionine = N(3)-methylpseudouridine(1915) in 23S rRNA + S-adenosyl-L-homocysteine + H(+). Specifically methylates the pseudouridine at position 1915 (m3Psi1915) in 23S rRNA. The chain is Ribosomal RNA large subunit methyltransferase H from Limosilactobacillus reuteri (strain DSM 20016) (Lactobacillus reuteri).